Consider the following 273-residue polypeptide: 4-hydroxy-tetrahydrodipicolinate reductase (273 aa).

NAD(+)-binding positions include 12 to 17 and Glu-38; that span reads GAGGRM. Arg-39 is an NADP(+) binding site. NAD(+) contacts are provided by residues 102 to 104 and 126 to 129; these read GTT and AANF. Catalysis depends on His-159, which acts as the Proton donor/acceptor. His-160 is a binding site for (S)-2,3,4,5-tetrahydrodipicolinate. The active-site Proton donor is the Lys-163. (S)-2,3,4,5-tetrahydrodipicolinate is bound at residue 169–170; that stretch reads GT.

It belongs to the DapB family. As to quaternary structure, homotetramer.

Its subcellular location is the cytoplasm. The enzyme catalyses (S)-2,3,4,5-tetrahydrodipicolinate + NAD(+) + H2O = (2S,4S)-4-hydroxy-2,3,4,5-tetrahydrodipicolinate + NADH + H(+). It catalyses the reaction (S)-2,3,4,5-tetrahydrodipicolinate + NADP(+) + H2O = (2S,4S)-4-hydroxy-2,3,4,5-tetrahydrodipicolinate + NADPH + H(+). It participates in amino-acid biosynthesis; L-lysine biosynthesis via DAP pathway; (S)-tetrahydrodipicolinate from L-aspartate: step 4/4. Functionally, catalyzes the conversion of 4-hydroxy-tetrahydrodipicolinate (HTPA) to tetrahydrodipicolinate. The protein is 4-hydroxy-tetrahydrodipicolinate reductase of Shigella boydii serotype 4 (strain Sb227).